A 467-amino-acid chain; its full sequence is Ribulose bisphosphate carboxylase large chain (467 aa).

At lysine 6 the chain carries N6,N6,N6-trimethyllysine. Substrate is bound by residues asparagine 115 and threonine 165. Lysine 167 functions as the Proton acceptor in the catalytic mechanism. Lysine 169 contacts substrate. The Mg(2+) site is built by lysine 193, aspartate 195, and glutamate 196. Lysine 193 is modified (N6-carboxylysine). The Proton acceptor role is filled by histidine 286. Residues arginine 287, histidine 319, and serine 371 each coordinate substrate.

Belongs to the RuBisCO large chain family. Type I subfamily. In terms of assembly, heterohexadecamer of 8 large chains and 8 small chains; disulfide-linked. The disulfide link is formed within the large subunit homodimers. Mg(2+) is required as a cofactor. The disulfide bond which can form in the large chain dimeric partners within the hexadecamer appears to be associated with oxidative stress and protein turnover.

It is found in the plastid. It localises to the chloroplast. The enzyme catalyses 2 (2R)-3-phosphoglycerate + 2 H(+) = D-ribulose 1,5-bisphosphate + CO2 + H2O. It carries out the reaction D-ribulose 1,5-bisphosphate + O2 = 2-phosphoglycolate + (2R)-3-phosphoglycerate + 2 H(+). Functionally, ruBisCO catalyzes two reactions: the carboxylation of D-ribulose 1,5-bisphosphate, the primary event in carbon dioxide fixation, as well as the oxidative fragmentation of the pentose substrate in the photorespiration process. Both reactions occur simultaneously and in competition at the same active site. The sequence is that of Ribulose bisphosphate carboxylase large chain from Cedrus atlantica (Atlas cedar).